A 238-amino-acid chain; its full sequence is Probable transcriptional regulatory protein YeeN (238 aa).

This sequence belongs to the TACO1 family. YeeN subfamily.

Its subcellular location is the cytoplasm. This is Probable transcriptional regulatory protein YeeN from Salmonella typhi.